A 381-amino-acid polypeptide reads, in one-letter code: Succinyl-diaminopimelate desuccinylase (381 aa).

Zn(2+) is bound at residue His68. Residue Asp70 is part of the active site. Asp101 serves as a coordination point for Zn(2+). The Proton acceptor role is filled by Glu135. Zn(2+) contacts are provided by Glu136, Glu164, and His350.

This sequence belongs to the peptidase M20A family. DapE subfamily. Homodimer. It depends on Zn(2+) as a cofactor. The cofactor is Co(2+).

It carries out the reaction N-succinyl-(2S,6S)-2,6-diaminopimelate + H2O = (2S,6S)-2,6-diaminopimelate + succinate. Its pathway is amino-acid biosynthesis; L-lysine biosynthesis via DAP pathway; LL-2,6-diaminopimelate from (S)-tetrahydrodipicolinate (succinylase route): step 3/3. Functionally, catalyzes the hydrolysis of N-succinyl-L,L-diaminopimelic acid (SDAP), forming succinate and LL-2,6-diaminopimelate (DAP), an intermediate involved in the bacterial biosynthesis of lysine and meso-diaminopimelic acid, an essential component of bacterial cell walls. This is Succinyl-diaminopimelate desuccinylase from Neisseria meningitidis serogroup A / serotype 4A (strain DSM 15465 / Z2491).